Consider the following 277-residue polypeptide: Large ribosomal subunit protein uL2 (277 aa).

Disordered stretches follow at residues 35-58 (QPLP…GGGH) and 213-277 (WKGI…RKRK).

This sequence belongs to the universal ribosomal protein uL2 family. As to quaternary structure, part of the 50S ribosomal subunit. Forms a bridge to the 30S subunit in the 70S ribosome.

In terms of biological role, one of the primary rRNA binding proteins. Required for association of the 30S and 50S subunits to form the 70S ribosome, for tRNA binding and peptide bond formation. It has been suggested to have peptidyltransferase activity; this is somewhat controversial. Makes several contacts with the 16S rRNA in the 70S ribosome. This Staphylococcus carnosus (strain TM300) protein is Large ribosomal subunit protein uL2.